The following is a 480-amino-acid chain: Phenolic acid decarboxylase (480 aa).

Mn(2+) is bound by residues Asn-163, His-185, and Glu-227. Residues Asn-163–Arg-168 and Met-184–His-185 each bind prenylated FMN. The active-site Proton donor is Glu-278. Positions Thr-443–Glu-466 are disordered.

The protein belongs to the UbiD family. YclC subfamily. As to quaternary structure, homohexamer. The cofactor is prenylated FMN. Mn(2+) is required as a cofactor.

The enzyme catalyses 4-hydroxybenzoate + H(+) = phenol + CO2. The catalysed reaction is 3,4-dihydroxybenzoate + H(+) = catechol + CO2. With respect to regulation, inhibited by Zn(2+), (2,3,4)-trihydroxybenzoate and (3,4,5)-trihydroxybenzoate. Ammonium and rubidium ions decrease the activity of the carboxylation of 3,4-dihydroxybenzoate by about 20%. Functionally, involved in the non-oxidative decarboxylation and detoxification of phenolic derivatives under anaerobic conditions. Oxygen-sensitive phenolic acid decarboxylase that catalyzes the reversible decarboxylation of 4-hydroxybenzoate and 3,4-dihydroxybenzoate. In Sedimentibacter hydroxybenzoicus (Clostridium hydroxybenzoicum), this protein is Phenolic acid decarboxylase.